Consider the following 268-residue polypeptide: Stomatin homolog PYRAB06580 (268 aa).

The chain crosses the membrane as a helical span at residues 1-21 (MILPTNFFVTTIILLFILIFL). Coiled coils occupy residues 125-152 (GQAHLDELLSERDKLNMQLQRIIDEATD) and 178-213 (KQAEAERERRARITLAEAERQAAEKLREAAEIISEH).

It belongs to the band 7/mec-2 family. In terms of assembly, homotrimer.

It is found in the membrane. The protein is Stomatin homolog PYRAB06580 of Pyrococcus abyssi (strain GE5 / Orsay).